The primary structure comprises 392 residues: Ceramide synthase 5 (392 aa).

At 1–46 (MATAAQGPLSLLWGWLWSERFWLPENVSWADLEGPADGYGYPRGRH) the chain is on the lumenal side. N-linked (GlcNAc...) asparagine glycosylation is present at Asn26. The chain crosses the membrane as a helical span at residues 47-67 (ILSVFPLAAGIFFVRLLFERF). Residues 75 to 136 (CIGIEDSGPY…RHRRNQDKPP (62 aa)) form a homeobox-like region. Residues 139–340 (TKFCESMWRF…IARIALKALI (202 aa)) enclose the TLC domain. The next 4 membrane-spanning stretches (helical) occupy residues 148–168 (FTFY…SPWF), 183–203 (LSSG…SLMF), 214–234 (FLIM…SYIN), and 272–292 (LFVI…PFWI). The Last loop motif motif lies at 299–309 (ESWEIIGPYAS). The helical transmembrane segment at 311–331 (WLLNGLLLTLQLLHVIWSYLI) threads the bilayer. The Cytoplasmic portion of the chain corresponds to 332–392 (ARIALKALIR…HMGGSYWAEE (61 aa)). The disordered stretch occupies residues 349 to 392 (RSDVESSSEEEDVTTCTKSPCDSSSSNGANRVNGHMGGSYWAEE). Residues 362–378 (TTCTKSPCDSSSSNGAN) show a composition bias toward polar residues.

In terms of assembly, interacts with PAQR4; the interaction regulates the stability and activity of CERS5 and is inhibited in presence of ceramides. In terms of processing, phosphorylated at the C-terminus by CK2.

Its subcellular location is the endoplasmic reticulum membrane. It catalyses the reaction a sphingoid base + hexadecanoyl-CoA = an N-hexadecanoyl-sphingoid base + CoA + H(+). The catalysed reaction is sphinganine + hexadecanoyl-CoA = N-hexadecanoylsphinganine + CoA + H(+). It carries out the reaction hexadecasphinganine + hexadecanoyl-CoA = N-hexadecanoylhexadecasphinganine + CoA + H(+). The enzyme catalyses sphing-4-enine + hexadecanoyl-CoA = N-hexadecanoylsphing-4-enine + CoA + H(+). It catalyses the reaction 2-hydroxyhexadecanoyl-CoA + sphinganine = N-(2-hydroxyhexadecanoyl)-sphinganine + CoA + H(+). The catalysed reaction is sphinganine + tetradecanoyl-CoA = N-(tetradecanoyl)-sphinganine + CoA + H(+). It carries out the reaction sphinganine + octadecanoyl-CoA = N-(octadecanoyl)-sphinganine + CoA + H(+). The enzyme catalyses sphinganine + (9Z)-octadecenoyl-CoA = N-(9Z-octadecenoyl)-sphinganine + CoA + H(+). It catalyses the reaction a fatty acyl-CoA + sphing-4-enine = an N-acylsphing-4-enine + CoA + H(+). The protein operates within lipid metabolism; sphingolipid metabolism. With respect to regulation, inhibited by fumonisin B1. Its function is as follows. Ceramide synthase that catalyzes the transfer of the acyl chain from acyl-CoA to a sphingoid base, with high selectivity toward palmitoyl-CoA (hexadecanoyl-CoA; C16:0-CoA). Can use other acyl donors, but with less efficiency. N-acylates sphinganine and sphingosine bases to form dihydroceramides and ceramides in de novo synthesis and salvage pathways, respectively. Plays a role in de novo ceramide synthesis and surfactant homeostasis in pulmonary epithelia. This Homo sapiens (Human) protein is Ceramide synthase 5.